The primary structure comprises 987 residues: Rho GTPase-activating protein 6 (987 aa).

Positions 1-21 (MSAQSLLHSVFSCSSPASGGT) are enriched in polar residues. 3 disordered regions span residues 1–60 (MSAQ…RGST), 76–117 (SRLA…SGSF), and 144–170 (GSGS…IFSS). Ser37 bears the Phosphoserine mark. Residues 44 to 57 (GGCGSEMGAEGGLR) show a composition bias toward gly residues. Over residues 100–115 (SSFSTPSTPQEKSPSG) the composition is skewed to polar residues. Positions 144 to 159 (GSGSASSRSPASILSS) are enriched in low complexity. At Ser265 the chain carries Phosphoserine. The disordered stretch occupies residues 324-363 (KQNKELSSSNSSLSSTSETPNESTSPNTPEPAPRARRRGA). Residues 328–350 (ELSSSNSSLSSTSETPNESTSPN) are compositionally biased toward low complexity. Residues 344–354 (NESTSPNTPEP) carry the SH3-binding motif. At Ser365 the chain carries Phosphoserine. The 202-residue stretch at 403–604 (LSLNPIYRQV…KMIENYEALF (202 aa)) folds into the Rho-GAP domain. The interval 641-676 (DILQTEVSFSMGGRHSSTDSNKASSGDISPYDNNSP) is disordered. A compositionally biased stretch (polar residues) spans 658-676 (TDSNKASSGDISPYDNNSP). A phosphoserine mark is found at Ser669, Ser675, Ser682, Ser713, Ser758, Ser776, Ser781, Ser790, and Ser824. A disordered region spans residues 709–731 (GHLSSPKSKSRESSPGPRLGKEM). Disordered stretches follow at residues 825-847 (TPHI…PFLS) and 863-953 (WLQS…QDKQ). Positions 939–948 (LSSAYSLSAS) are enriched in low complexity. Residues Ser941 and Ser944 each carry the phosphoserine modification.

As to expression, expressed in retina and lung.

The protein localises to the cytoplasm. In terms of biological role, GTPase activator for the Rho-type GTPases by converting them to an inactive GDP-bound state. Could regulate the interactions of signaling molecules with the actin cytoskeleton. Promotes continuous elongation of cytoplasmic processes during cell motility and simultaneous retraction of the cell body changing the cell morphology. The polypeptide is Rho GTPase-activating protein 6 (Arhgap6) (Mus musculus (Mouse)).